The primary structure comprises 61 residues: Small ribosomal subunit protein uS14 (61 aa).

Zn(2+) contacts are provided by cysteine 24, cysteine 27, cysteine 40, and cysteine 43.

It belongs to the universal ribosomal protein uS14 family. Zinc-binding uS14 subfamily. In terms of assembly, part of the 30S ribosomal subunit. Contacts proteins S3 and S10. It depends on Zn(2+) as a cofactor.

In terms of biological role, binds 16S rRNA, required for the assembly of 30S particles and may also be responsible for determining the conformation of the 16S rRNA at the A site. The polypeptide is Small ribosomal subunit protein uS14 (Beutenbergia cavernae (strain ATCC BAA-8 / DSM 12333 / CCUG 43141 / JCM 11478 / NBRC 16432 / NCIMB 13614 / HKI 0122)).